Consider the following 142-residue polypeptide: Hemoglobin subunit alpha-2 (142 aa).

A Globin domain is found at 2–142 (VLSAADKSNI…VSTVLTSKYR (141 aa)). Residue His-59 coordinates O2. His-88 contributes to the heme b binding site.

Belongs to the globin family. As to quaternary structure, heterotetramer of two alpha chains and two beta chains. Red blood cells.

Its function is as follows. Involved in oxygen transport from the lung to the various peripheral tissues. This is Hemoglobin subunit alpha-2 from Bubalus bubalis (Domestic water buffalo).